Reading from the N-terminus, the 255-residue chain is Probable transcriptional regulatory protein PCC7424_2775 (255 aa).

The protein belongs to the TACO1 family.

It localises to the cytoplasm. In Gloeothece citriformis (strain PCC 7424) (Cyanothece sp. (strain PCC 7424)), this protein is Probable transcriptional regulatory protein PCC7424_2775.